Reading from the N-terminus, the 417-residue chain is Gamma-glutamyl phosphate reductase (417 aa).

Belongs to the gamma-glutamyl phosphate reductase family.

It is found in the cytoplasm. The catalysed reaction is L-glutamate 5-semialdehyde + phosphate + NADP(+) = L-glutamyl 5-phosphate + NADPH + H(+). It functions in the pathway amino-acid biosynthesis; L-proline biosynthesis; L-glutamate 5-semialdehyde from L-glutamate: step 2/2. Catalyzes the NADPH-dependent reduction of L-glutamate 5-phosphate into L-glutamate 5-semialdehyde and phosphate. The product spontaneously undergoes cyclization to form 1-pyrroline-5-carboxylate. The chain is Gamma-glutamyl phosphate reductase from Escherichia coli (strain 55989 / EAEC).